The primary structure comprises 329 residues: Glycerol-3-phosphate dehydrogenase [NAD(P)+] (329 aa).

Residues Trp-11, Arg-31, and Lys-105 each coordinate NADPH. Sn-glycerol 3-phosphate-binding residues include Lys-105, Gly-135, and Thr-137. Ala-139 lines the NADPH pocket. Sn-glycerol 3-phosphate contacts are provided by Lys-190, Asp-243, Ser-253, Arg-254, and Asn-255. Catalysis depends on Lys-190, which acts as the Proton acceptor. Arg-254 is an NADPH binding site. NADPH contacts are provided by Val-277 and Glu-279.

This sequence belongs to the NAD-dependent glycerol-3-phosphate dehydrogenase family.

It is found in the cytoplasm. It catalyses the reaction sn-glycerol 3-phosphate + NAD(+) = dihydroxyacetone phosphate + NADH + H(+). It carries out the reaction sn-glycerol 3-phosphate + NADP(+) = dihydroxyacetone phosphate + NADPH + H(+). The protein operates within membrane lipid metabolism; glycerophospholipid metabolism. Functionally, catalyzes the reduction of the glycolytic intermediate dihydroxyacetone phosphate (DHAP) to sn-glycerol 3-phosphate (G3P), the key precursor for phospholipid synthesis. This Maridesulfovibrio salexigens (strain ATCC 14822 / DSM 2638 / NCIMB 8403 / VKM B-1763) (Desulfovibrio salexigens) protein is Glycerol-3-phosphate dehydrogenase [NAD(P)+].